Here is a 1148-residue protein sequence, read N- to C-terminus: Protocadherin-19 (1148 aa).

Positions 1 to 21 (MESLLLPVLLLLAILWTQAAA) are cleaved as a signal peptide. Cadherin domains follow at residues 22–129 (LINL…APSF), 130–238 (PAAQ…NPVF), 239–346 (SEST…PPVI), 350–453 (SVNS…HPHF), 454–563 (SKPY…TPVI), and 569–672 (INGT…QESM). Topologically, residues 22 to 678 (LINLKYSVEE…QESMGSVNLS (657 aa)) are extracellular. Positions 31, 32, 88, and 90 each coordinate Ca(2+). A disulfide bond links Cys93 and Cys99. Positions 121, 123, 124, 125, 140, 155, 157, 199, 212, 230, 231, 232, 233, 234, and 249 each coordinate Ca(2+). N-linked (GlcNAc...) asparagine glycosylation is present at Asn261. Positions 264, 266, 270, 305, 307, 338, 340, 341, 342, 360, 375, 377, 381, 412, and 414 each coordinate Ca(2+). A glycan (N-linked (GlcNAc...) asparagine) is linked at Asn420. Residues Asp427, Asp445, Glu446, Asn447, Asp448, Asn449, Glu464, Asp479, Asp481, Asn485, Asn522, Glu524, and Asp537 each coordinate Ca(2+). Asn485 is a glycosylation site (N-linked (GlcNAc...) asparagine). N-linked (GlcNAc...) asparagine glycosylation occurs at Asn546. Ca(2+) is bound by residues Asp555, Val556, Asn557, Asp558, and Asn559. N-linked (GlcNAc...) asparagine glycosylation occurs at Asn570. The Ca(2+) site is built by Asp594, Asp596, Asn600, and Asp646. N-linked (GlcNAc...) asparagine glycosylation occurs at Asn676. Residues 679–699 (LIFIIALGSIAGILFVTMIFV) traverse the membrane as a helical segment. Residues 700–1148 (AIKCKRDNKE…GVKRLKDIVL (449 aa)) lie on the Cytoplasmic side of the membrane. Disordered stretches follow at residues 901-921 (GNSL…EHDV) and 1100-1148 (NVNN…DIVL). 3 stretches are compositionally biased toward basic and acidic residues: residues 906–921 (DSGH…EHDV), 1109–1123 (SEAE…KVMH), and 1130–1148 (KEGR…DIVL).

Homodimer; antiparallel. In terms of tissue distribution, moderately expressed in all regions of the brain examined, with lowest levels found in the cerebellum. Moderate expression is also found in ovary, and low expression in all other tissues tested. Also detected in primary skin fibroblast.

It is found in the cell membrane. Calcium-dependent cell-adhesion protein. The polypeptide is Protocadherin-19 (PCDH19) (Homo sapiens (Human)).